The primary structure comprises 519 residues: Glutamate--cysteine ligase (519 aa).

Belongs to the glutamate--cysteine ligase type 1 family. Type 1 subfamily.

The enzyme catalyses L-cysteine + L-glutamate + ATP = gamma-L-glutamyl-L-cysteine + ADP + phosphate + H(+). The protein operates within sulfur metabolism; glutathione biosynthesis; glutathione from L-cysteine and L-glutamate: step 1/2. In Edwardsiella ictaluri (strain 93-146), this protein is Glutamate--cysteine ligase.